A 114-amino-acid chain; its full sequence is CDIPQSTNCGGNVYSNDDINTAIQGALDDVANGDRPDNYPHQYYDEASEDITLCCGSGPWSEFPLVYNGPYYSSRDNYVSPGPDRVIYQTNTGEFCATVTHTGAASYDGFTQCS.

3 cysteine pairs are disulfide-bonded: Cys-1-Cys-54, Cys-9-Cys-113, and Cys-55-Cys-96. The Ca(2+) site is built by Asp-29, Val-30, Ala-31, Asn-32, Asp-37, and Tyr-39. A substrate-binding site is contributed by Tyr-39–Glu-49. The active site involves His-41. Glu-62 serves as the catalytic Proton acceptor. Arg-85 is a binding site for substrate. His-101 functions as the Proton donor in the catalytic mechanism. A substrate-binding site is contributed by Asp-108–Phe-110.

It belongs to the ribonuclease U2 family.

The enzyme catalyses [RNA] containing adenosine + H2O = an [RNA fragment]-3'-adenosine-3'-phosphate + a 5'-hydroxy-ribonucleotide-3'-[RNA fragment].. It catalyses the reaction [RNA] containing guanosine + H2O = an [RNA fragment]-3'-guanosine-3'-phosphate + a 5'-hydroxy-ribonucleotide-3'-[RNA fragment].. The polypeptide is Ribonuclease U2 (RNU2) (Ustilago sphaerogena (Smut fungus)).